Reading from the N-terminus, the 226-residue chain is Cytidylate kinase (226 aa).

11 to 19 (GPASAGKST) provides a ligand contact to ATP.

This sequence belongs to the cytidylate kinase family. Type 1 subfamily.

It localises to the cytoplasm. It catalyses the reaction CMP + ATP = CDP + ADP. The enzyme catalyses dCMP + ATP = dCDP + ADP. This Pediococcus pentosaceus (strain ATCC 25745 / CCUG 21536 / LMG 10740 / 183-1w) protein is Cytidylate kinase.